Consider the following 212-residue polypeptide: Large ribosomal subunit protein uL3 (212 aa).

Gln153 carries the post-translational modification N5-methylglutamine.

The protein belongs to the universal ribosomal protein uL3 family. In terms of assembly, part of the 50S ribosomal subunit. Forms a cluster with proteins L14 and L19. In terms of processing, methylated by PrmB.

Its function is as follows. One of the primary rRNA binding proteins, it binds directly near the 3'-end of the 23S rRNA, where it nucleates assembly of the 50S subunit. This is Large ribosomal subunit protein uL3 from Colwellia psychrerythraea (strain 34H / ATCC BAA-681) (Vibrio psychroerythus).